Reading from the N-terminus, the 1476-residue chain is Copper-transporting ATPase 1 (1476 aa).

The Cytoplasmic portion of the chain corresponds to methionine 1–serine 642. HMA domains follow at residues asparagine 8–leucine 74 and threonine 85–glycine 151. Residues threonine 18, cysteine 19, and cysteine 22 each coordinate Cu(+). Position 152 is a phosphothreonine (threonine 152). HMA domains follow at residues valine 171–phenylalanine 237 and serine 276–tyrosine 342. Residues cysteine 182, cysteine 185, cysteine 287, and cysteine 290 each contribute to the Cu(+) site. Threonine 326 carries the phosphothreonine modification. A phosphoserine mark is found at serine 338, serine 352, serine 356, and serine 361. 3 HMA domains span residues glutamine 376–valine 442, serine 478–threonine 544, and glycine 554–serine 620. Cu(+) contacts are provided by cysteine 387, cysteine 390, cysteine 489, cysteine 492, cysteine 565, and cysteine 568. A helical membrane pass occupies residues serine 643–glutamate 665. N-linked (GlcNAc...) asparagine glycosylation is found at asparagine 674 and asparagine 685. 3 helical membrane-spanning segments follow: residues isoleucine 695–glycine 717, methionine 736–tyrosine 760, and serine 770–glutamate 788. Asparagine 887 carries an N-linked (GlcNAc...) asparagine glycan. The helical transmembrane segment at tyrosine 930 to glutamine 952 threads the bilayer. N-linked (GlcNAc...) asparagine glycosylation is present at asparagine 953. The chain crosses the membrane as a helical span at residues alanine 978 to threonine 998. Aspartate 1034 functions as the 4-aspartylphosphate intermediate in the catalytic mechanism. N-linked (GlcNAc...) asparagine glycosylation is found at asparagine 1130 and asparagine 1134. 2 helical membrane passes run isoleucine 1347–valine 1373 and glycine 1379–leucine 1397. Phosphoserine is present on residues serine 1420 and serine 1422. The N-linked (GlcNAc...) asparagine glycan is linked to asparagine 1448. Residues serine 1450, serine 1453, serine 1456, serine 1459, serine 1463, serine 1466, and serine 1476 each carry the phosphoserine modification.

This sequence belongs to the cation transport ATPase (P-type) (TC 3.A.3) family. Monomer. Interacts with PDZD11. Interacts with ATOX1 and COMMD1. Interacts with TYRP1. Directly interacts with SOD3; this interaction is copper-dependent and is required for SOD3 activity. As to expression, expressed in most tissues except liver.

The protein localises to the golgi apparatus. It is found in the trans-Golgi network membrane. Its subcellular location is the cell membrane. It catalyses the reaction Cu(+)(in) + ATP + H2O = Cu(+)(out) + ADP + phosphate + H(+). Functionally, may function in the export of copper from the cytoplasm to an intracellular organelle. It may serve as well for the export of other metals. This is Copper-transporting ATPase 1 (ATP7A) from Cricetulus griseus (Chinese hamster).